A 135-amino-acid chain; its full sequence is UPF0299 membrane protein YPK_2559 (135 aa).

Transmembrane regions (helical) follow at residues 30-50, 66-86, and 93-113; these read LLLP…FVLL, LLIR…MQYY, and FGPI…VVAY.

This sequence belongs to the UPF0299 family.

The protein localises to the cell inner membrane. The protein is UPF0299 membrane protein YPK_2559 of Yersinia pseudotuberculosis serotype O:3 (strain YPIII).